Here is a 435-residue protein sequence, read N- to C-terminus: Ras association domain-containing protein 9 (435 aa).

The disordered stretch occupies residues 1–22 (MAPFGRNLLKTRHKNRSPTKDM). One can recognise a Ras-associating domain in the interval 25 to 119 (EEKEIVVWVC…MQFVLVKTDA (95 aa)). A coiled-coil region spans residues 195–291 (HTIHQQVQRM…KLSAEIEREV (97 aa)). The interval 371–423 (SKDGCQGKENRGKEAEASSSNGEIPPLTQRVFNTYTNDTDSDTGISSNHSQDS) is disordered. A compositionally biased stretch (basic and acidic residues) spans 375–386 (CQGKENRGKEAE). The span at 400–423 (RVFNTYTNDTDSDTGISSNHSQDS) shows a compositional bias: polar residues.

As to quaternary structure, interacts with PAM. As to expression, testis, kidney, skeletal muscle, liver, lung, brain, heart, pituitary gland, adrenal gland and ovary.

Its subcellular location is the endosome. Its function is as follows. May play a role in regulating vesicuar trafficking in cells. This chain is Ras association domain-containing protein 9 (Rassf9), found in Rattus norvegicus (Rat).